A 222-amino-acid polypeptide reads, in one-letter code: Protein GrpE (222 aa).

2 disordered regions span residues 1–21 (MNDG…ENGQ) and 200–222 (KGGP…PEGA).

It belongs to the GrpE family. As to quaternary structure, homodimer.

It is found in the cytoplasm. Participates actively in the response to hyperosmotic and heat shock by preventing the aggregation of stress-denatured proteins, in association with DnaK and GrpE. It is the nucleotide exchange factor for DnaK and may function as a thermosensor. Unfolded proteins bind initially to DnaJ; upon interaction with the DnaJ-bound protein, DnaK hydrolyzes its bound ATP, resulting in the formation of a stable complex. GrpE releases ADP from DnaK; ATP binding to DnaK triggers the release of the substrate protein, thus completing the reaction cycle. Several rounds of ATP-dependent interactions between DnaJ, DnaK and GrpE are required for fully efficient folding. This is Protein GrpE from Chelativorans sp. (strain BNC1).